The following is a 189-amino-acid chain: Proline-rich protein 29 (189 aa).

Positions 152-189 are disordered; it reads SREREVRAVPPPPPPSATGTVGADVPPASDYYDAESLL.

The sequence is that of Proline-rich protein 29 (PRR29) from Homo sapiens (Human).